The primary structure comprises 698 residues: Serine/threonine-protein kinase Nek8 (698 aa).

The region spanning 4-258 is the Protein kinase domain; sequence YERIRVVGRG…LSHIMAQPLC (255 aa). Residues 10–18 and Lys-33 contribute to the ATP site; that span reads VGRGAFGIV. The active-site Proton acceptor is the Asp-128. Position 162 is a phosphothreonine; by autocatalysis (Thr-162). Residues 278 to 309 form a disordered region; the sequence is EKSLTPGPPIASGSTGSRATSARCRGVPRGPV. Residues 288–309 are compositionally biased toward low complexity; it reads ASGSTGSRATSARCRGVPRGPV. RCC1 repeat units lie at residues 416-467, 468-519, 520-585, 586-637, and 638-690; these read GIIM…LSTD, GELF…LTSP, GRVL…ITAS, GDCY…VGAE, and GEVY…AVRS.

It belongs to the protein kinase superfamily. NEK Ser/Thr protein kinase family. NIMA subfamily. In terms of assembly, interacts with PKD2; may regulate PKD2 targeting to the cilium. Interacts with ANKS6. Component of a complex containing at least ANKS6, INVS, NEK8 and NPHP3. ANKS6 may organize complex assembly by linking INVS and NPHP3 to NEK8 and INVS may target the complex to the proximal ciliary axoneme. Interacts with ANKS3. It depends on Mg(2+) as a cofactor. As to expression, kidney, liver, and testis.

It localises to the cytoplasm. The protein localises to the cytoskeleton. The protein resides in the cell projection. It is found in the cilium. Its subcellular location is the microtubule organizing center. It localises to the centrosome. The protein localises to the cilium axoneme. It carries out the reaction L-seryl-[protein] + ATP = O-phospho-L-seryl-[protein] + ADP + H(+). The enzyme catalyses L-threonyl-[protein] + ATP = O-phospho-L-threonyl-[protein] + ADP + H(+). Required for renal tubular integrity. May regulate local cytoskeletal structure in kidney tubule epithelial cells. May regulate ciliary biogenesis through targeting of proteins to the cilia. Plays a role in organogenesis and is involved in the regulation of the Hippo signaling pathway. The polypeptide is Serine/threonine-protein kinase Nek8 (Nek8) (Mus musculus (Mouse)).